The chain runs to 640 residues: 1,4-alpha-glucan branching enzyme GlgB (640 aa).

Asp-318 serves as the catalytic Nucleophile. Residue Glu-371 is the Proton donor of the active site.

This sequence belongs to the glycosyl hydrolase 13 family. GlgB subfamily. As to quaternary structure, monomer.

It catalyses the reaction Transfers a segment of a (1-&gt;4)-alpha-D-glucan chain to a primary hydroxy group in a similar glucan chain.. Its pathway is glycan biosynthesis; glycogen biosynthesis. Its function is as follows. Catalyzes the formation of the alpha-1,6-glucosidic linkages in glycogen by scission of a 1,4-alpha-linked oligosaccharide from growing alpha-1,4-glucan chains and the subsequent attachment of the oligosaccharide to the alpha-1,6 position. The protein is 1,4-alpha-glucan branching enzyme GlgB of Francisella tularensis subsp. holarctica (strain LVS).